Reading from the N-terminus, the 583-residue chain is J protein JJJ2 (583 aa).

The J domain occupies 11 to 79 (RTTYYSILGL…KLRYDRDLKI (69 aa)). Polar residues predominate over residues 215-224 (SYSEDPNSCL). Positions 215–313 (SYSEDPNSCL…SGSHDSNLQS (99 aa)) are disordered. Serine 229 is subject to Phosphoserine. Low complexity predominate over residues 240–252 (QQQQQQQQQQQQQ). A compositionally biased stretch (basic and acidic residues) spans 262–281 (SPDEEKKNNKEPKRESRVSP). The segment covering 298-313 (KTSTFSSGSHDSNLQS) has biased composition (polar residues).

It is found in the cytoplasm. Its subcellular location is the nucleus. The chain is J protein JJJ2 (JJJ2) from Saccharomyces cerevisiae (strain ATCC 204508 / S288c) (Baker's yeast).